The primary structure comprises 204 residues: Ribonuclease HII (204 aa).

The RNase H type-2 domain maps to 14–204 (QYICGVDEVG…SFKLSCLGEK (191 aa)). Asp20, Glu21, and Asp116 together coordinate a divalent metal cation.

The protein belongs to the RNase HII family. Mn(2+) is required as a cofactor. It depends on Mg(2+) as a cofactor.

The protein resides in the cytoplasm. It carries out the reaction Endonucleolytic cleavage to 5'-phosphomonoester.. In terms of biological role, endonuclease that specifically degrades the RNA of RNA-DNA hybrids. This chain is Ribonuclease HII, found in Chloroherpeton thalassium (strain ATCC 35110 / GB-78).